Reading from the N-terminus, the 600-residue chain is Adenine deaminase (600 aa).

It belongs to the metallo-dependent hydrolases superfamily. Adenine deaminase family. Mn(2+) is required as a cofactor.

The catalysed reaction is adenine + H2O + H(+) = hypoxanthine + NH4(+). This Chelativorans sp. (strain BNC1) protein is Adenine deaminase.